The chain runs to 140 residues: ATP synthase epsilon chain (140 aa).

The protein belongs to the ATPase epsilon chain family. In terms of assembly, F-type ATPases have 2 components, CF(1) - the catalytic core - and CF(0) - the membrane proton channel. CF(1) has five subunits: alpha(3), beta(3), gamma(1), delta(1), epsilon(1). CF(0) has three main subunits: a, b and c.

The protein resides in the cell inner membrane. Functionally, produces ATP from ADP in the presence of a proton gradient across the membrane. This chain is ATP synthase epsilon chain, found in Nitrosomonas eutropha (strain DSM 101675 / C91 / Nm57).